A 146-amino-acid chain; its full sequence is Large ribosomal subunit protein uL16 (146 aa).

It belongs to the universal ribosomal protein uL16 family. As to quaternary structure, part of the 50S ribosomal subunit.

Binds 23S rRNA and is also seen to make contacts with the A and possibly P site tRNAs. This is Large ribosomal subunit protein uL16 from Lactobacillus helveticus (strain DPC 4571).